The chain runs to 1434 residues: DNA-directed RNA polymerase subunit beta' (1434 aa).

Cysteine 70, cysteine 72, cysteine 85, and cysteine 88 together coordinate Zn(2+). Mg(2+) contacts are provided by aspartate 460, aspartate 462, and aspartate 464. Zn(2+) contacts are provided by cysteine 840, cysteine 915, cysteine 922, and cysteine 925.

It belongs to the RNA polymerase beta' chain family. The RNAP catalytic core consists of 2 alpha, 1 beta, 1 beta' and 1 omega subunit. When a sigma factor is associated with the core the holoenzyme is formed, which can initiate transcription. The cofactor is Mg(2+). It depends on Zn(2+) as a cofactor.

The enzyme catalyses RNA(n) + a ribonucleoside 5'-triphosphate = RNA(n+1) + diphosphate. Its function is as follows. DNA-dependent RNA polymerase catalyzes the transcription of DNA into RNA using the four ribonucleoside triphosphates as substrates. This Aeromonas hydrophila subsp. hydrophila (strain ATCC 7966 / DSM 30187 / BCRC 13018 / CCUG 14551 / JCM 1027 / KCTC 2358 / NCIMB 9240 / NCTC 8049) protein is DNA-directed RNA polymerase subunit beta'.